A 269-amino-acid polypeptide reads, in one-letter code: 2-dehydro-3-deoxyphosphooctonate aldolase (269 aa).

It belongs to the KdsA family.

Its subcellular location is the cytoplasm. It carries out the reaction D-arabinose 5-phosphate + phosphoenolpyruvate + H2O = 3-deoxy-alpha-D-manno-2-octulosonate-8-phosphate + phosphate. It functions in the pathway carbohydrate biosynthesis; 3-deoxy-D-manno-octulosonate biosynthesis; 3-deoxy-D-manno-octulosonate from D-ribulose 5-phosphate: step 2/3. The protein operates within bacterial outer membrane biogenesis; lipopolysaccharide biosynthesis. The chain is 2-dehydro-3-deoxyphosphooctonate aldolase from Chlamydia caviae (strain ATCC VR-813 / DSM 19441 / 03DC25 / GPIC) (Chlamydophila caviae).